The chain runs to 296 residues: MTELASPTSFSMPDIGKSPVVLTARRLMRRRSFRIGLVLLLIVVLAAVLAPWITNGKPNATSVRMRFQPPGLEHLFGTDNFGRDLWTRVLYGAQVSLWIGLTVAVLSAILGAIIGIAAAWYRRFDTLLMRVMDALMAFPAILLAIGISAALGPHLSSVIIALTSAYIPRCARIVRASALVLRETDYVDAARLAGASDLRIITRHILPNCLAPLLVTLTFVFAYAILAEATLSFLGIGTPPPHASWGSIVAQGRDYSVDAWWIMLFPGIAITISALAINLIGDGLRDVLDPRLKVEG.

6 consecutive transmembrane segments (helical) span residues 35 to 55 (IGLVLLLIVVLAAVLAPWITN), 97 to 117 (LWIGLTVAVLSAILGAIIGIA), 131 to 151 (VMDALMAFPAILLAIGISAAL), 205 to 225 (ILPNCLAPLLVTLTFVFAYAI), 229 to 249 (ATLSFLGIGTPPPHASWGSIV), and 260 to 280 (WWIMLFPGIAITISALAINLI). One can recognise an ABC transmembrane type-1 domain in the interval 97–281 (LWIGLTVAVL…ISALAINLIG (185 aa)).

The protein belongs to the binding-protein-dependent transport system permease family. The complex is composed of two ATP-binding proteins (BRA1094), two transmembrane proteins (BRA1092 and BRA1093) and a solute-binding protein (BRA1090).

The protein resides in the cell inner membrane. Probably part of an ABC transporter complex that could be involved in peptide import. Probably responsible for the translocation of the substrate across the membrane. The polypeptide is Putative peptide transport system permease protein BRA1093/BS1330_II1085 (Brucella suis biovar 1 (strain 1330)).